We begin with the raw amino-acid sequence, 196 residues long: Homeobox protein ANF-1 (196 aa).

Positions 119-178 form a DNA-binding region, homeobox; it reads GRRPRTAFTRNQIEVLENVFKMNSYPGIDIREELARKLDLEEDRIQIWFQNRRAKLKRSH.

The protein belongs to the ANF homeobox family.

Its subcellular location is the nucleus. Its function is as follows. May be involved in the early patterning of the most anterior region of the main embryonic body axis. The protein is Homeobox protein ANF-1 of Gallus gallus (Chicken).